The following is a 375-amino-acid chain: Succinyl-diaminopimelate desuccinylase (375 aa).

Residue His-66 coordinates Zn(2+). Asp-68 is a catalytic residue. Residue Asp-99 participates in Zn(2+) binding. The Proton acceptor role is filled by Glu-133. Positions 134, 162, and 348 each coordinate Zn(2+).

It belongs to the peptidase M20A family. DapE subfamily. Homodimer. Zn(2+) is required as a cofactor. The cofactor is Co(2+).

The enzyme catalyses N-succinyl-(2S,6S)-2,6-diaminopimelate + H2O = (2S,6S)-2,6-diaminopimelate + succinate. Its pathway is amino-acid biosynthesis; L-lysine biosynthesis via DAP pathway; LL-2,6-diaminopimelate from (S)-tetrahydrodipicolinate (succinylase route): step 3/3. Catalyzes the hydrolysis of N-succinyl-L,L-diaminopimelic acid (SDAP), forming succinate and LL-2,6-diaminopimelate (DAP), an intermediate involved in the bacterial biosynthesis of lysine and meso-diaminopimelic acid, an essential component of bacterial cell walls. The polypeptide is Succinyl-diaminopimelate desuccinylase (Stenotrophomonas maltophilia (strain K279a)).